We begin with the raw amino-acid sequence, 302 residues long: Citrate lyase subunit beta (302 aa).

Substrate is bound by residues arginine 69 and glutamate 132. Residues glutamate 132 and aspartate 159 each coordinate Mg(2+).

The protein belongs to the HpcH/HpaI aldolase family. Citrate lyase beta subunit subfamily. In terms of assembly, oligomer with a subunit composition of (alpha,beta,gamma)6. Mg(2+) serves as cofactor.

The protein localises to the cytoplasm. It catalyses the reaction citrate = oxaloacetate + acetate. The catalysed reaction is (3S)-citryl-CoA = oxaloacetate + acetyl-CoA. Its function is as follows. Represents a citryl-ACP lyase. The chain is Citrate lyase subunit beta (citE) from Leuconostoc mesenteroides subsp. cremoris.